Consider the following 80-residue polypeptide: Kappa-actitoxin-Avd4f (80 aa).

An N-terminal signal peptide occupies residues M1–A19. Positions A20–F31 are excised as a propeptide. Intrachain disulfides connect C41–C76, C43–C69, and C59–C77.

This sequence belongs to the sea anemone type 3 (BDS) potassium channel toxin family. In terms of tissue distribution, moderately expressed in the ectodermal tissue from the distal and proximal tentacles, body wall, and oral disk.

Its subcellular location is the secreted. The protein localises to the nematocyst. Its function is as follows. Blocks Kv3 voltage-gated potassium channels. Reduces blood pressure. In Anemonia viridis (Snakelocks anemone), this protein is Kappa-actitoxin-Avd4f.